Reading from the N-terminus, the 473-residue chain is Photosystem II CP43 reaction center protein (473 aa).

The propeptide occupies 1-14 (MKTLYSPRRFYPVE). An N-acetylthreonine modification is found at Thr-15. Position 15 is a phosphothreonine (Thr-15). A run of 5 helical transmembrane segments spans residues 69–93 (LFEVAHFIPEKPMYEQGLILLPHLA), 134–155 (LIGPETLEESFPFFGYTWKDRN), 178–200 (KALFFGGIYDTWAPGGGDVRKIT), 255–275 (KPFAWTRRAFVWSGEAYLSYS), and 291–312 (WFNNTAYPSEFYGPTGPEASQA). Residue Glu-367 coordinates [CaMn4O5] cluster. The helical transmembrane segment at 447 to 471 (RARAAAAGFEKGIDRDLEPVLFMTP) threads the bilayer.

Belongs to the PsbB/PsbC family. PsbC subfamily. PSII is composed of 1 copy each of membrane proteins PsbA, PsbB, PsbC, PsbD, PsbE, PsbF, PsbH, PsbI, PsbJ, PsbK, PsbL, PsbM, PsbT, PsbX, PsbY, PsbZ, Psb30/Ycf12, at least 3 peripheral proteins of the oxygen-evolving complex and a large number of cofactors. It forms dimeric complexes. Requires Binds multiple chlorophylls and provides some of the ligands for the Ca-4Mn-5O cluster of the oxygen-evolving complex. It may also provide a ligand for a Cl- that is required for oxygen evolution. PSII binds additional chlorophylls, carotenoids and specific lipids. as cofactor.

Its subcellular location is the plastid. The protein localises to the chloroplast thylakoid membrane. One of the components of the core complex of photosystem II (PSII). It binds chlorophyll and helps catalyze the primary light-induced photochemical processes of PSII. PSII is a light-driven water:plastoquinone oxidoreductase, using light energy to abstract electrons from H(2)O, generating O(2) and a proton gradient subsequently used for ATP formation. This chain is Photosystem II CP43 reaction center protein, found in Gnetum parvifolium (Small-leaved jointfir).